The sequence spans 187 residues: Large ribosomal subunit protein uL5 (187 aa).

It belongs to the universal ribosomal protein uL5 family. Part of the 50S ribosomal subunit; part of the 5S rRNA/L5/L18/L25 subcomplex. Contacts the 5S rRNA and the P site tRNA. Forms a bridge to the 30S subunit in the 70S ribosome.

This is one of the proteins that bind and probably mediate the attachment of the 5S RNA into the large ribosomal subunit, where it forms part of the central protuberance. In the 70S ribosome it contacts protein S13 of the 30S subunit (bridge B1b), connecting the 2 subunits; this bridge is implicated in subunit movement. Contacts the P site tRNA; the 5S rRNA and some of its associated proteins might help stabilize positioning of ribosome-bound tRNAs. The sequence is that of Large ribosomal subunit protein uL5 from Gluconobacter oxydans (strain 621H) (Gluconobacter suboxydans).